Reading from the N-terminus, the 330-residue chain is Embigin (330 aa).

The N-terminal stretch at 1 to 33 (MRSHTGLRALVAPGYPLLLLCLLAATRPDPAEG) is a signal peptide. Topologically, residues 34–254 (DPTDPTFTSL…QLGESEEQNE (221 aa)) are extracellular. 2 consecutive Ig-like V-type domains span residues 38–161 (PTFT…IHVP) and 162–256 (KAHG…NELV). N-linked (GlcNAc...) asparagine glycosylation is found at N55, N62, N70, N101, N118, N191, N198, N216, and N221. 2 disulfide bridges follow: C89/C145 and C182/C240. The helical transmembrane segment at 255–283 (LVVLSFLVPLKPFLAILAEVILLVAIILL) threads the bilayer. Residues 284–330 (CEVYTHKKKNDPDAGKEFEQIEQLKSDDSNGIENNVPRYRKTDSADQ) are Cytoplasmic-facing. The segment covering 293–311 (NDPDAGKEFEQIEQLKSDD) has biased composition (basic and acidic residues). Positions 293–330 (NDPDAGKEFEQIEQLKSDDSNGIENNVPRYRKTDSADQ) are disordered. Residue S312 is modified to Phosphoserine.

In terms of assembly, interacts with SLC16A1, SLC16A6 and SLC16A7. Only member of the immunoglobulin superfamily to be expressed in embryonal carcinoma cells, which resemble multipotential cells of early embryos.

Its subcellular location is the cell membrane. It is found in the synapse. Plays a role in targeting the monocarboxylate transporters SLC16A1, SLC16A6 and SLC16A7 to the cell membrane. Plays a role in the outgrowth of motoneurons and in the formation of neuromuscular junctions. Following muscle denervation, promotes nerve terminal sprouting and the formation of additional acetylcholine receptor clusters at synaptic sites without affecting terminal Schwann cell number or morphology. Delays the retraction of terminal sprouts following re-innervation of denervated endplates. In Mus musculus (Mouse), this protein is Embigin (Emb).